A 158-amino-acid polypeptide reads, in one-letter code: Cyclic pyranopterin monophosphate synthase (158 aa).

Substrate contacts are provided by residues 76 to 78 (LCH) and 114 to 115 (ME). Residue Asp-129 is part of the active site.

The protein belongs to the MoaC family. In terms of assembly, homohexamer; trimer of dimers.

The catalysed reaction is (8S)-3',8-cyclo-7,8-dihydroguanosine 5'-triphosphate = cyclic pyranopterin phosphate + diphosphate. It participates in cofactor biosynthesis; molybdopterin biosynthesis. Functionally, catalyzes the conversion of (8S)-3',8-cyclo-7,8-dihydroguanosine 5'-triphosphate to cyclic pyranopterin monophosphate (cPMP). The protein is Cyclic pyranopterin monophosphate synthase of Shewanella loihica (strain ATCC BAA-1088 / PV-4).